We begin with the raw amino-acid sequence, 495 residues long: Adenosylhomocysteinase (495 aa).

3 residues coordinate substrate: T71, D156, and E218. Residue 219–221 (TTT) participates in NAD(+) binding. The substrate site is built by K248 and D252. Residues N253, 282–287 (GYGDVG), E305, N340, 361–363 (IGH), and N409 contribute to the NAD(+) site.

It belongs to the adenosylhomocysteinase family. The cofactor is NAD(+).

The protein localises to the cytoplasm. The catalysed reaction is S-adenosyl-L-homocysteine + H2O = L-homocysteine + adenosine. It participates in amino-acid biosynthesis; L-homocysteine biosynthesis; L-homocysteine from S-adenosyl-L-homocysteine: step 1/1. May play a key role in the regulation of the intracellular concentration of adenosylhomocysteine. The sequence is that of Adenosylhomocysteinase from Mycobacterium bovis (strain ATCC BAA-935 / AF2122/97).